The following is a 944-amino-acid chain: LPS-assembly protein LptD (944 aa).

A signal peptide spans 1–33 (MALKSPAFRRKFPLLVTGGLLALQPLATSFVVA). The interval 52 to 102 (KATGNLPPRPVHPGAAAASSGAEAPGEVGEAQAEKPMLVTESKGRGLKSRS) is disordered. Over residues 64–82 (PGAAAASSGAEAPGEVGEA) the composition is skewed to low complexity.

Belongs to the LptD family. Component of the lipopolysaccharide transport and assembly complex. Interacts with LptE and LptA.

The protein resides in the cell outer membrane. Together with LptE, is involved in the assembly of lipopolysaccharide (LPS) at the surface of the outer membrane. This Pseudomonas entomophila (strain L48) protein is LPS-assembly protein LptD.